The primary structure comprises 256 residues: Follistatin-related protein 3 (256 aa).

The signal sequence occupies residues 1 to 23; that stretch reads MRSGALWPLLWGALVWTVGSVGA. The 72-residue stretch at 34 to 105 folds into the TB domain; sequence GVCWLQQGRE…SCDGVECGPG (72 aa). 8 disulfides stabilise this stretch: Cys36–Cys59, Cys46–Cys90, Cys60–Cys93, Cys97–Cys108, Cys102–Cys117, Cys119–Cys151, Cys123–Cys144, and Cys133–Cys165. A glycan (N-linked (GlcNAc...) asparagine) is linked at Asn71. One can recognise a Follistatin-like 1 domain in the interval 97 to 117; that stretch reads CDGVECGPGKACRMLGGRPHC. 2 consecutive Kazal-like domains span residues 111 to 167 and 187 to 243; these read LGGR…RCQK and SAHC…ICTG. One can recognise a Follistatin-like 2 domain in the interval 168–191; sequence SCAQVVCPRPQSCLVDQTGSAHCV. 3 disulfides stabilise this stretch: Cys193/Cys227, Cys198/Cys220, and Cys209/Cys241. An N-linked (GlcNAc...) asparagine glycan is attached at Asn213.

In terms of assembly, interacts with INHBA and INHBB. Interacts with FN1. Interacts with ADAM12. Interacts with MLLT10; the interaction enhances MLLT10 in vitro transcriptional activity and self-association. Interacts with MSTN. Abundantly expressed in heart, lung, kidney and testis. Continuously expressed in embryonic heart.

It localises to the secreted. It is found in the nucleus. Its function is as follows. The secreted form is a binding and antagonizing protein for members of the TGF-beta family, such as activin, BMP2 and MSTN. Inhibits activin A-, activin B-, BMP2- and MSDT-induced cellular signaling; more effective on activin A than on activin B. Involved in bone formation; inhibits osteoclast differentiation. Involved in hematopoiesis; involved in differentiation of hemopoietic progenitor cells, increases hematopoietic cell adhesion to fibronectin and seems to contribute to the adhesion of hematopoietic precursor cells to the bone marrow stroma. The nuclear form is probably involved in transcriptional regulation via interaction with MLLT10. In Mus musculus (Mouse), this protein is Follistatin-related protein 3 (Fstl3).